Consider the following 124-residue polypeptide: Large ribosomal subunit protein bL17 (124 aa).

This sequence belongs to the bacterial ribosomal protein bL17 family. In terms of assembly, part of the 50S ribosomal subunit. Contacts protein L32.

The protein is Large ribosomal subunit protein bL17 of Mycoplasma pneumoniae (strain ATCC 29342 / M129 / Subtype 1) (Mycoplasmoides pneumoniae).